The primary structure comprises 125 residues: Multifunctional methyltransferase subunit TRM112-like protein (125 aa).

Positions 2-119 (RLLTHNLLSS…SRGIPNMLLS (118 aa)) constitute a TRM112 domain. Serine 119 carries the post-translational modification Phosphoserine.

The protein belongs to the TRM112 family. As to quaternary structure, part of the heterodimeric BUD23-TRM112 methyltransferase complex; this heterodimerization is necessary for the metabolic stability and activity of the catalytic subunit BUD23. Part of the heterodimeric N6AMT1-TRM112 methyltransferase complex; this heterodimerization is necessary for S-adenosyl-L-methionine-binding to N6AMT1/HEMK2. Part of the heterodimeric ALKBH8-TRM112 methyltransferase complex. Part of the heterodimeric METTL5-TRM112 methyltransferase complex; this heterodimerization is necessary for the stability of the catalytic subunit METTL5. Part of the heterodimeric THUMPD3-TRM112 methyltransferase complex; this complex forms an active tRNA methyltransferase, where TRMT112 acts as an activator of the catalytic subunit THUMPD3. Part of the heterodimeric THUMPD2-TRM112 methyltransferase complex; this complex forms an active tRNA methyltransferase, where TRMT112 acts as an activator of the catalytic subunit THUMPD2. Part of the heterodimeric TRMT11-TRM112 methyltransferase complex; this complex forms an active tRNA methyltransferase, where TRMT112 acts as an activator of the catalytic subunit TRMT11.

It is found in the nucleus. The protein resides in the nucleoplasm. Its subcellular location is the cytoplasm. The protein localises to the perinuclear region. Functionally, acts as an activator of both rRNA/tRNA and protein methyltransferases. Together with methyltransferase BUD23, methylates the N(7) position of a guanine in 18S rRNA. The heterodimer with HEMK2/N6AMT1 catalyzes N5-methylation of ETF1 on 'Gln-185', using S-adenosyl L-methionine as methyl donor. The heterodimer with ALKBH8 catalyzes the methylation of 5-carboxymethyl uridine to 5-methylcarboxymethyl uridine at the wobble position of the anticodon loop in target tRNA species. Together with methyltransferase THUMPD3, catalyzes the formation of N(2)-methylguanosine at position 6 in a broad range of tRNA substrates and at position 7 of tRNA(Trp). Involved in the pre-rRNA processing steps leading to small-subunit rRNA production. Together with methyltransferase METTL5, specifically methylates the 6th position of adenine in position 1832 of 18S rRNA. The sequence is that of Multifunctional methyltransferase subunit TRM112-like protein (TRMT112) from Bos taurus (Bovine).